The following is a 244-amino-acid chain: Phosphoadenosine 5'-phosphosulfate reductase (244 aa).

Cys239 acts as the Nucleophile; cysteine thiosulfonate intermediate in catalysis.

The protein belongs to the PAPS reductase family. CysH subfamily.

Its subcellular location is the cytoplasm. It catalyses the reaction [thioredoxin]-disulfide + sulfite + adenosine 3',5'-bisphosphate + 2 H(+) = [thioredoxin]-dithiol + 3'-phosphoadenylyl sulfate. It participates in sulfur metabolism; hydrogen sulfide biosynthesis; sulfite from sulfate: step 3/3. Catalyzes the formation of sulfite from phosphoadenosine 5'-phosphosulfate (PAPS) using thioredoxin as an electron donor. The sequence is that of Phosphoadenosine 5'-phosphosulfate reductase from Enterobacter sp. (strain 638).